Reading from the N-terminus, the 345-residue chain is OVARIAN TUMOR DOMAIN-containing deubiquitinating enzyme 9 (345 aa).

Positions 204-328 (LVENKIEGDG…EVHYNSIYPE (125 aa)) constitute an OTU domain. Residue Asp212 is part of the active site. The active-site Nucleophile is Cys215. His321 is an active-site residue.

Belongs to the peptidase C85 family.

The catalysed reaction is Thiol-dependent hydrolysis of ester, thioester, amide, peptide and isopeptide bonds formed by the C-terminal Gly of ubiquitin (a 76-residue protein attached to proteins as an intracellular targeting signal).. In terms of biological role, hydrolase that can remove conjugated ubiquitin from proteins in vitro and may therefore play an important regulatory role at the level of protein turnover by preventing degradation. Cysteine protease with a preference for 'Lys-63' and 'Lys-48' -linked ubiquitin (UB) tetramers as substrates. Also cleaves RUB-GST fusion. The polypeptide is OVARIAN TUMOR DOMAIN-containing deubiquitinating enzyme 9 (Arabidopsis thaliana (Mouse-ear cress)).